The chain runs to 1217 residues: Valine--tRNA ligase (1217 aa).

The GST C-terminal domain maps to 27–155 (NAKQQSQVWQ…ISLCEKMVPV (129 aa)). The 'HIGH' region signature appears at 293 to 303 (PNVTGSLHLGH). Residues 809-813 (KMSKS) carry the 'KMSKS' region motif. Lys-812 contributes to the ATP binding site.

It belongs to the class-I aminoacyl-tRNA synthetase family.

It carries out the reaction tRNA(Val) + L-valine + ATP = L-valyl-tRNA(Val) + AMP + diphosphate. The chain is Valine--tRNA ligase (vars1) from Takifugu rubripes (Japanese pufferfish).